Here is a 203-residue protein sequence, read N- to C-terminus: Pyridoxine/pyridoxamine 5'-phosphate oxidase (203 aa).

Residues R50 to K55, Y65 to T66, K71, K72, and Q94 each bind FMN. K55 is a substrate binding site. The substrate site is built by Y112, R116, and S120. Residues Q129 to S130 and W174 each bind FMN. R180–H182 contributes to the substrate binding site. R184 provides a ligand contact to FMN.

This sequence belongs to the pyridoxamine 5'-phosphate oxidase family. As to quaternary structure, homodimer. It depends on FMN as a cofactor.

The enzyme catalyses pyridoxamine 5'-phosphate + O2 + H2O = pyridoxal 5'-phosphate + H2O2 + NH4(+). The catalysed reaction is pyridoxine 5'-phosphate + O2 = pyridoxal 5'-phosphate + H2O2. The protein operates within cofactor metabolism; pyridoxal 5'-phosphate salvage; pyridoxal 5'-phosphate from pyridoxamine 5'-phosphate: step 1/1. Its pathway is cofactor metabolism; pyridoxal 5'-phosphate salvage; pyridoxal 5'-phosphate from pyridoxine 5'-phosphate: step 1/1. Its function is as follows. Catalyzes the oxidation of either pyridoxine 5'-phosphate (PNP) or pyridoxamine 5'-phosphate (PMP) into pyridoxal 5'-phosphate (PLP). The chain is Pyridoxine/pyridoxamine 5'-phosphate oxidase from Brucella canis (strain ATCC 23365 / NCTC 10854 / RM-666).